A 501-amino-acid chain; its full sequence is Phase 2 flagellin (501 aa).

The protein belongs to the bacterial flagellin family.

It is found in the secreted. It localises to the bacterial flagellum. In terms of biological role, flagellin is the subunit protein which polymerizes to form the filaments of bacterial flagella. The sequence is that of Phase 2 flagellin (fljB) from Salmonella abortus-equi.